A 221-amino-acid polypeptide reads, in one-letter code: Triosephosphate isomerase (221 aa).

8–10 (NLK) is a substrate binding site. The active-site Electrophile is the His-92. The Proton acceptor role is filled by Glu-140. Residues Ile-145, Gly-180, and 201-202 (AS) each bind substrate.

It belongs to the triosephosphate isomerase family. As to quaternary structure, homotetramer; dimer of dimers.

The protein localises to the cytoplasm. The catalysed reaction is D-glyceraldehyde 3-phosphate = dihydroxyacetone phosphate. It participates in carbohydrate biosynthesis; gluconeogenesis. Its pathway is carbohydrate degradation; glycolysis; D-glyceraldehyde 3-phosphate from glycerone phosphate: step 1/1. Involved in the gluconeogenesis. Catalyzes stereospecifically the conversion of dihydroxyacetone phosphate (DHAP) to D-glyceraldehyde-3-phosphate (G3P). The protein is Triosephosphate isomerase of Methanococcoides burtonii (strain DSM 6242 / NBRC 107633 / OCM 468 / ACE-M).